The following is a 326-amino-acid chain: Fructose-1,6-bisphosphatase class 1 2 (326 aa).

Residues E84, D103, L105, and D106 each contribute to the Mg(2+) site. Residues 106-109, N198, and K262 contribute to the substrate site; that span reads DGSS. E268 serves as a coordination point for Mg(2+).

This sequence belongs to the FBPase class 1 family. Homotetramer. It depends on Mg(2+) as a cofactor.

It localises to the cytoplasm. The catalysed reaction is beta-D-fructose 1,6-bisphosphate + H2O = beta-D-fructose 6-phosphate + phosphate. Its pathway is carbohydrate biosynthesis; gluconeogenesis. This is Fructose-1,6-bisphosphatase class 1 2 from Pseudoalteromonas translucida (strain TAC 125).